The sequence spans 197 residues: Protein GrpE (197 aa).

Positions 1–43 (MSSKEQKTPDGQAPEEIVTEQHEEVESVESAESAEQVDPRDEE) are disordered.

This sequence belongs to the GrpE family. Homodimer.

The protein resides in the cytoplasm. Its function is as follows. Participates actively in the response to hyperosmotic and heat shock by preventing the aggregation of stress-denatured proteins, in association with DnaK and GrpE. It is the nucleotide exchange factor for DnaK and may function as a thermosensor. Unfolded proteins bind initially to DnaJ; upon interaction with the DnaJ-bound protein, DnaK hydrolyzes its bound ATP, resulting in the formation of a stable complex. GrpE releases ADP from DnaK; ATP binding to DnaK triggers the release of the substrate protein, thus completing the reaction cycle. Several rounds of ATP-dependent interactions between DnaJ, DnaK and GrpE are required for fully efficient folding. The chain is Protein GrpE from Cronobacter sakazakii (strain ATCC BAA-894) (Enterobacter sakazakii).